The chain runs to 283 residues: Bifunctional protein FolD (283 aa).

NADP(+) is bound at residue 166 to 168; sequence GAS.

Belongs to the tetrahydrofolate dehydrogenase/cyclohydrolase family. In terms of assembly, homodimer.

The enzyme catalyses (6R)-5,10-methylene-5,6,7,8-tetrahydrofolate + NADP(+) = (6R)-5,10-methenyltetrahydrofolate + NADPH. It catalyses the reaction (6R)-5,10-methenyltetrahydrofolate + H2O = (6R)-10-formyltetrahydrofolate + H(+). It participates in one-carbon metabolism; tetrahydrofolate interconversion. In terms of biological role, catalyzes the oxidation of 5,10-methylenetetrahydrofolate to 5,10-methenyltetrahydrofolate and then the hydrolysis of 5,10-methenyltetrahydrofolate to 10-formyltetrahydrofolate. The chain is Bifunctional protein FolD from Coxiella burnetii (strain Dugway 5J108-111).